The sequence spans 402 residues: 2-pyrone synthase (402 aa).

K60, R63, C169, L272, R274, G310, R312, and A313 together coordinate acetoacetyl-CoA. Residue C169 is part of the active site.

Belongs to the thiolase-like superfamily. Chalcone/stilbene synthases family. In terms of tissue distribution, expressed in both vegetative and reproductive organs. The expression is strong in the leaf, scape (the inflorescence stem) and corolla (both in the ligule and the unpigmented tube), moderate in the bract and carpel, detectable in the root and pappus but not detectable in the stamen.

The enzyme catalyses 2 malonyl-CoA + acetyl-CoA + 2 H(+) = triacetate lactone + 2 CO2 + 3 CoA. In terms of biological role, polyketide synthase, which uses acetyl-CoA and two condensation reactions with malonyl-CoA to form triacetic acid lactone (also called methylpyrone), a precursor of phytoalexin. May participate in insect and pathogen resistance. In Gerbera hybrida (Daisy), this protein is 2-pyrone synthase.